The sequence spans 325 residues: Cytochrome f (325 aa).

The signal sequence occupies residues 1 to 40; it reads MKTPELMAIWQRLKTACLVAIATFGLFFASDVLFPQAAAA. Residues tyrosine 41, cysteine 62, cysteine 65, and histidine 66 each contribute to the heme site. Residues 290 to 309 traverse the membrane as a helical segment; sequence IYGYMAFVAGIMLTQIFLVL.

Belongs to the cytochrome f family. The 4 large subunits of the cytochrome b6-f complex are cytochrome b6, subunit IV (17 kDa polypeptide, PetD), cytochrome f and the Rieske protein, while the 4 small subunits are PetG, PetL, PetM and PetN. The complex functions as a dimer. It depends on heme as a cofactor.

The protein localises to the cellular thylakoid membrane. Functionally, component of the cytochrome b6-f complex, which mediates electron transfer between photosystem II (PSII) and photosystem I (PSI), cyclic electron flow around PSI, and state transitions. The chain is Cytochrome f (petA) from Picosynechococcus sp. (strain ATCC 27264 / PCC 7002 / PR-6) (Agmenellum quadruplicatum).